Reading from the N-terminus, the 494-residue chain is Alpha-amylase-related protein (494 aa).

The first 20 residues, 1–20 (MFKFASAVILCLVAASSTQA), serve as a signal peptide directing secretion. Gln-21 carries the post-translational modification Pyrrolidone carboxylic acid. A disulfide bond links Cys-48 and Cys-104. Ca(2+) is bound by residues Asn-118, Gln-169, and Asp-178. Cysteines 157 and 171 form a disulfide. Arg-206 is a binding site for chloride. Asp-208 functions as the Nucleophile in the catalytic mechanism. His-212 contributes to the Ca(2+) binding site. The active-site Proton donor is the Glu-245. Chloride-binding residues include Asn-308 and Arg-343. 3 disulfides stabilise this stretch: Cys-376–Cys-382, Cys-418–Cys-441, and Cys-448–Cys-460.

This sequence belongs to the glycosyl hydrolase 13 family. As to quaternary structure, monomer. Ca(2+) is required as a cofactor. The cofactor is chloride.

The protein localises to the secreted. The catalysed reaction is Endohydrolysis of (1-&gt;4)-alpha-D-glucosidic linkages in polysaccharides containing three or more (1-&gt;4)-alpha-linked D-glucose units.. The chain is Alpha-amylase-related protein (Amyrel) from Drosophila ercepeae (Fruit fly).